The chain runs to 100 residues: UPF0473 protein lwe1514 (100 aa).

Belongs to the UPF0473 family.

The protein is UPF0473 protein lwe1514 of Listeria welshimeri serovar 6b (strain ATCC 35897 / DSM 20650 / CCUG 15529 / CIP 8149 / NCTC 11857 / SLCC 5334 / V8).